Here is a 117-residue protein sequence, read N- to C-terminus: Large ribosomal subunit protein eL18 (117 aa).

This sequence belongs to the eukaryotic ribosomal protein eL18 family.

The chain is Large ribosomal subunit protein eL18 from Archaeoglobus fulgidus (strain ATCC 49558 / DSM 4304 / JCM 9628 / NBRC 100126 / VC-16).